The sequence spans 266 residues: Chymotrypsin-like elastase family member 1 (266 aa).

An N-terminal signal peptide occupies residues 1-16; the sequence is MLRLLVFTSLVLYGHS. A propeptide spans 17–26 (activation peptide); it reads TQDFPETNAR. Residues 27–264 form the Peptidase S1 domain; sequence VVGGTAVSKN…YISWINNAIA (238 aa). Cys56 and Cys72 are oxidised to a cystine. His71 acts as the Charge relay system in catalysis. Asp85, Asn87, Gln90, and Glu95 together coordinate Ca(2+). N-linked (GlcNAc...) asparagine glycosylation occurs at Asn87. The active-site Charge relay system is the Asp119. 3 disulfides stabilise this stretch: Cys153/Cys220, Cys184/Cys200, and Cys210/Cys240. Ser214 serves as the catalytic Charge relay system. An N-linked (GlcNAc...) asparagine glycan is attached at Asn241.

This sequence belongs to the peptidase S1 family. Elastase subfamily. Requires Ca(2+) as cofactor. Pancreas.

The protein localises to the secreted. It carries out the reaction Hydrolysis of proteins, including elastin. Preferential cleavage: Ala-|-Xaa.. Serine proteases that hydrolyze many proteins in addition to elastin. This is Chymotrypsin-like elastase family member 1 (CELA1) from Bos taurus (Bovine).